Here is a 280-residue protein sequence, read N- to C-terminus: Diaminopimelate epimerase (280 aa).

Residues Asn13 and Asn66 each contribute to the substrate site. The active-site Proton donor is Cys75. Substrate is bound by residues 76–77 (GN), Asn162, Asn195, and 213–214 (ER). Cys222 acts as the Proton acceptor in catalysis. 223–224 (GT) contributes to the substrate binding site.

The protein belongs to the diaminopimelate epimerase family. As to quaternary structure, homodimer.

Its subcellular location is the cytoplasm. The catalysed reaction is (2S,6S)-2,6-diaminopimelate = meso-2,6-diaminopimelate. Its pathway is amino-acid biosynthesis; L-lysine biosynthesis via DAP pathway; DL-2,6-diaminopimelate from LL-2,6-diaminopimelate: step 1/1. Catalyzes the stereoinversion of LL-2,6-diaminopimelate (L,L-DAP) to meso-diaminopimelate (meso-DAP), a precursor of L-lysine and an essential component of the bacterial peptidoglycan. This chain is Diaminopimelate epimerase, found in Synechococcus elongatus (strain ATCC 33912 / PCC 7942 / FACHB-805) (Anacystis nidulans R2).